We begin with the raw amino-acid sequence, 267 residues long: MAASLPLSAAIVGAEESVDKEVLEMEYLFEKFLMPSDLCSNTEWLGIPEEHVRKFGMMLEDRDGYSVIFFQDGVVPGKLWCFRYWKSNGVHGLTKGWRCFVREKGLKAGDTISFFRGSACGRLFICCRLGTHATFASSSTLHHGFSMPPPPARPLVGLQSGMLARDVPSLGQARLHDGNQDGGGAPSRHVPSSGRRVEAQLSRVSSRRQRRTMKHSIPEPTIETPPILESMFLIAAPPAVKCLRLFGVNIYVLPVSSSGQPKQESSP.

The segment at residues 30 to 131 is a DNA-binding region (TF-B3); sequence EKFLMPSDLC…RLFICCRLGT (102 aa). The interval 172-221 is disordered; that stretch reads QARLHDGNQDGGGAPSRHVPSSGRRVEAQLSRVSSRRQRRTMKHSIPEPT. Over residues 205 to 214 the composition is skewed to basic residues; it reads SSRRQRRTMK.

It is found in the nucleus. This is B3 domain-containing protein Os02g0455800 from Oryza sativa subsp. japonica (Rice).